A 240-amino-acid polypeptide reads, in one-letter code: Ribonuclease P protein component 3 (240 aa).

Belongs to the eukaryotic/archaeal RNase P protein component 3 family. As to quaternary structure, consists of a catalytic RNA component and at least 4-5 protein subunits.

It is found in the cytoplasm. It catalyses the reaction Endonucleolytic cleavage of RNA, removing 5'-extranucleotides from tRNA precursor.. Its function is as follows. Part of ribonuclease P, a protein complex that generates mature tRNA molecules by cleaving their 5'-ends. The protein is Ribonuclease P protein component 3 of Halorubrum lacusprofundi (strain ATCC 49239 / DSM 5036 / JCM 8891 / ACAM 34).